The following is a 526-amino-acid chain: Exodeoxyribonuclease 7 large subunit (526 aa).

The interval 496-526 is disordered; the sequence is GAMTTEGGTPPAGAKKRSAKPADPTKQGSLF.

The protein belongs to the XseA family. In terms of assembly, heterooligomer composed of large and small subunits.

It is found in the cytoplasm. It catalyses the reaction Exonucleolytic cleavage in either 5'- to 3'- or 3'- to 5'-direction to yield nucleoside 5'-phosphates.. Bidirectionally degrades single-stranded DNA into large acid-insoluble oligonucleotides, which are then degraded further into small acid-soluble oligonucleotides. This chain is Exodeoxyribonuclease 7 large subunit, found in Rhizobium etli (strain CIAT 652).